Here is a 358-residue protein sequence, read N- to C-terminus: Serine/threonine-protein phosphatase 2A activator (358 aa).

The interval 1 to 20 (MAEGERQPPPDSSEEAPPAT) is disordered. An N-acetylalanine modification is found at alanine 2. ATP-binding residues include arginine 183, threonine 188, and glycine 189. 2 residues coordinate Mg(2+): glycine 243 and aspartate 249. ATP-binding residues include proline 339, glutamine 342, and histidine 343.

This sequence belongs to the PTPA-type PPIase family. In terms of assembly, associates with PP2A heterodimeric core enzyme PP2A(D), composed of a 36 kDa catalytic subunit (subunit C) and a 65 kDa constant regulatory subunit (PR65 or subunit A). Interacts with the catalytic subunit PPP2CA (via C-terminus). Interacts with PPP2CB. In terms of tissue distribution, widely expressed.

The protein localises to the cytoplasm. Its subcellular location is the nucleus. It catalyses the reaction [protein]-peptidylproline (omega=180) = [protein]-peptidylproline (omega=0). In terms of biological role, PPIases accelerate the folding of proteins. It catalyzes the cis-trans isomerization of proline imidic peptide bonds in oligopeptides. Acts as a regulatory subunit for serine/threonine-protein phosphatase 2A (PP2A). Modulates PP2A activity or substrate specificity, probably by inducing a conformational change in the catalytic subunit, a proposed direct target of the PPIase. Can reactivate inactive phosphatase PP2A-phosphatase methylesterase complexes (PP2A(i)) in presence of ATP and Mg(2+). Reversibly stimulates the variable phosphotyrosyl phosphatase activity of PP2A core heterodimer PP2A(D) in presence of ATP and Mg(2+) (in vitro). The phosphotyrosyl phosphatase activity is dependent of an ATPase activity of the PP2A(D):PPP2R4 complex. Is involved in apoptosis; the function appears to be independent from PP2A. This is Serine/threonine-protein phosphatase 2A activator from Homo sapiens (Human).